A 114-amino-acid polypeptide reads, in one-letter code: Eukaryotic translation initiation factor 6 (114 aa).

It belongs to the eIF-6 family. Monomer. Associates with the 60S ribosomal subunit.

It localises to the cytoplasm. It is found in the nucleus. The protein resides in the nucleolus. Functionally, binds to the 60S ribosomal subunit and prevents its association with the 40S ribosomal subunit to form the 80S initiation complex in the cytoplasm. May also be involved in ribosome biogenesis. The protein is Eukaryotic translation initiation factor 6 of Trypanosoma cruzi.